A 483-amino-acid chain; its full sequence is FAD-linked oxidoreductase pgmH (483 aa).

The FAD-binding PCMH-type domain maps to 54–215 (SIRLATLVVY…TEFKYRVHKQ (162 aa)).

It belongs to the oxygen-dependent FAD-linked oxidoreductase family. FAD serves as cofactor.

The protein operates within pigment biosynthesis. It functions in the pathway secondary metabolite biosynthesis. FAD-linked oxidoreductase; part of the gene cluster that mediates the biosynthesis of pleosporalin A, ascomycone A, as well as a third cryptic naphthoquinone derived pigment, all responsible for the coloration of conidia. Essential for the production of pleosporalin A, but not the 2 other final products. The pathway begins with the biosynthesis of the cyclized heptaketide 3-acetonyl-1,6,8-trihydroxy-2-naphthaldehyde by the NR-PKS pgmA. The C-6 hydroxyl group is further methylated by the O-methyltransferase pgmB to yield fusarubinaldehyde which is in turn oxidized by the cytochrome P450 monooxygenase pgmC at C-9. The C-1 hydroxyl group is then methylated spontaneously. Although pgmE, pgmD and pgmH are essential for the production of pleosporalin A, it is not the case for the 2 other final products and it remains difficult to assign a specific function to each enzyme. PgmF and pgmG seem not to be involved in pigment biosynthesis although they were regulated by the cluster-specific transcription factor pgmR. This Aspergillus terreus (strain NIH 2624 / FGSC A1156) protein is FAD-linked oxidoreductase pgmH.